A 212-amino-acid polypeptide reads, in one-letter code: Glutathione S-transferase (212 aa).

The 82-residue stretch at 1–82 folds into the GST N-terminal domain; sequence MGMKLHGPAM…YIAHTYADKG (82 aa). Residues Ser-11, 12 to 13, 40 to 41, 53 to 54, and 66 to 67 each bind glutathione; these read PA, HK, QV, and ES. A GST C-terminal domain is found at 89–212; the sequence is DPKKMAIMSV…AWSKAIEYKQ (124 aa).

It belongs to the GST superfamily. Phi family.

The catalysed reaction is RX + glutathione = an S-substituted glutathione + a halide anion + H(+). Conjugation of reduced glutathione to a wide number of exogenous and endogenous hydrophobic electrophiles. The protein is Glutathione S-transferase of Hyoscyamus muticus (Egyptian henbane).